We begin with the raw amino-acid sequence, 237 residues long: Flagellar L-ring protein (237 aa).

An N-terminal signal peptide occupies residues 1–24; that stretch reads MNRPGFPRFSVLIASLCGITLLSG. A lipid anchor (N-palmitoyl cysteine) is attached at C25. The S-diacylglycerol cysteine moiety is linked to residue C25.

Belongs to the FlgH family. The basal body constitutes a major portion of the flagellar organelle and consists of four rings (L,P,S, and M) mounted on a central rod.

Its subcellular location is the cell outer membrane. The protein localises to the bacterial flagellum basal body. Functionally, assembles around the rod to form the L-ring and probably protects the motor/basal body from shearing forces during rotation. This Pseudomonas syringae pv. tomato (strain ATCC BAA-871 / DC3000) protein is Flagellar L-ring protein.